The sequence spans 555 residues: 4-coumarate--CoA ligase-like 9 (555 aa).

6 residues coordinate ATP: serine 200, serine 201, glycine 202, threonine 203, threonine 204, and lysine 208. Tyrosine 248 is a (E)-4-coumaroyl-AMP binding site. Arginine 269 provides a ligand contact to CoA. The interval 271 to 342 (DLRTFLRALV…RKFPGVQVEE (72 aa)) is SBD1. Alanine 320 is a binding site for (E)-4-coumaroyl-AMP. Residues glutamate 342, alanine 343, threonine 347, aspartate 431, and arginine 446 each contribute to the ATP site. Alanine 343 and threonine 347 together coordinate (E)-4-coumaroyl-AMP. Residues 343 to 410 (AYGLTEHSCI…VRSQSVMQGY (68 aa)) are SBD2. (E)-4-coumaroyl-AMP is bound by residues lysine 448 and lysine 452. Residues lysine 454 and glycine 455 each coordinate CoA. Lysine 537 lines the ATP pocket.

It belongs to the ATP-dependent AMP-binding enzyme family. As to quaternary structure, interacts with STS1. It depends on Mg(2+) as a cofactor.

It carries out the reaction (E)-4-coumarate + ATP + CoA = (E)-4-coumaroyl-CoA + AMP + diphosphate. The catalysed reaction is (E)-4-coumarate + ATP + H(+) = (E)-4-coumaroyl-AMP + diphosphate. The enzyme catalyses (E)-4-coumaroyl-AMP + CoA = (E)-4-coumaroyl-CoA + AMP + H(+). Its function is as follows. Carboxylate--CoA ligase that may use 4-coumarate as substrate. Follows a two-step reaction mechanism, wherein the carboxylate substrate first undergoes adenylation by ATP, followed by a thioesterification in the presence of CoA to yield the final CoA thioester. The protein is 4-coumarate--CoA ligase-like 9 (4CLL9) of Oryza sativa subsp. japonica (Rice).